The sequence spans 502 residues: Maturase K (502 aa).

This sequence belongs to the intron maturase 2 family. MatK subfamily.

The protein localises to the plastid. Its subcellular location is the chloroplast. Functionally, usually encoded in the trnK tRNA gene intron. Probably assists in splicing its own and other chloroplast group II introns. The protein is Maturase K of Vitis vinifera (Grape).